Here is a 310-residue protein sequence, read N- to C-terminus: MTDIRITEVPREAGFGDYFALLKPRVMSLVVFTALVGLLVAPATVHPMIALTGILFIALGAGASGALNMWWDADIDRVMKRTRNRPVPAGVVQPGEALGLGLALSGIAVVMLGLATNLFAAGLLAFTIFFYAVVYSMWLKRTTPQNIVIGGAAGAFPPMIGWAVATGGVSLESLFMFALIFMWTPPHFWSLALFMKTDYSDAGVPMLTVTHGRRVTRGHVLAYALLLAPLAVAGAFTGIGGPLYLVVALALNGWLLRGAVRIWRRDEAEAEADRYRTEKGFFRFSLYYLFLHFGAILAEAALKPYGLGGW.

9 helical membrane passes run 26–46, 47–67, 95–115, 118–138, 147–167, 174–194, 220–240, 243–263, and 281–301; these read VMSLVVFTALVGLLVAPATVH, PMIALTGILFIALGAGASGAL, GEALGLGLALSGIAVVMLGLA, LFAAGLLAFTIFFYAVVYSMW, IVIGGAAGAFPPMIGWAVATG, LFMFALIFMWTPPHFWSLALF, VLAYALLLAPLAVAGAFTGIG, LYLVVALALNGWLLRGAVRIW, and FFRFSLYYLFLHFGAILAEAA.

Belongs to the UbiA prenyltransferase family. Protoheme IX farnesyltransferase subfamily. As to quaternary structure, interacts with CtaA.

The protein resides in the cell inner membrane. The catalysed reaction is heme b + (2E,6E)-farnesyl diphosphate + H2O = Fe(II)-heme o + diphosphate. It participates in porphyrin-containing compound metabolism; heme O biosynthesis; heme O from protoheme: step 1/1. Functionally, converts heme B (protoheme IX) to heme O by substitution of the vinyl group on carbon 2 of heme B porphyrin ring with a hydroxyethyl farnesyl side group. In Cereibacter sphaeroides (strain ATCC 17025 / ATH 2.4.3) (Rhodobacter sphaeroides), this protein is Protoheme IX farnesyltransferase.